Consider the following 237-residue polypeptide: Phosphoribosylaminoimidazole-succinocarboxamide synthase (237 aa).

The protein belongs to the SAICAR synthetase family.

It carries out the reaction 5-amino-1-(5-phospho-D-ribosyl)imidazole-4-carboxylate + L-aspartate + ATP = (2S)-2-[5-amino-1-(5-phospho-beta-D-ribosyl)imidazole-4-carboxamido]succinate + ADP + phosphate + 2 H(+). Its pathway is purine metabolism; IMP biosynthesis via de novo pathway; 5-amino-1-(5-phospho-D-ribosyl)imidazole-4-carboxamide from 5-amino-1-(5-phospho-D-ribosyl)imidazole-4-carboxylate: step 1/2. The protein is Phosphoribosylaminoimidazole-succinocarboxamide synthase of Escherichia coli O127:H6 (strain E2348/69 / EPEC).